We begin with the raw amino-acid sequence, 675 residues long: MKFNSGALFEKLRGGAGEGNTLNIALYVGLAIFIVLALANFLLSATTANKAQENITRASEMRVISQQIAKNALEAAAGNADAFELLDKSQKGFQSAWNAVKDEQVSDPEAMARLQTLWDEVNANADVILKGEDTVLDLHEVADTLAQTIPSLQAEYEGVVEILVTTDAAPEQIAFAQRQSWLAERIVRSIAKVLEGGDGAVIAADSFGRDASLFGRIMNGMIEGDAAMGIDQVNDPDALDYLAEIADLFDEFVNQSVDEILETAPELFQVRNAADTIFRRSQDLLEESTNLNNQFENTTSGLFPSVWLGGVSAGLAVLFFFIIMAQRNRQAAKLKDELESENQRNQAAILRLLDELGDLADGDLTVQATVTEDFTGAIADSINYSIDQLRNLVQTINNSAVQVASAAQETQSTAMHLAEASEHQAQEIAGASAAVNEMAVSIDQVSANAAESAAVAERAVAIANKGAEVVQATIHGMDTIREQIQETSKRIKRLGESSQEIGDIVSLINDIADQTNILALNAAIQASMAGEAGRGFAVVADEVQRLAERSAAATKQIETLVKTIQTDTNEAVISMEATTAEVVKGARLAQDAGVALEEIESVSKTLADLIQNISNAARQQAASAGHISNTMNVIQEITSQTSAGTTATARSIGNLAEMAQDMRNSVAGFRLPEHS.

Helical transmembrane passes span 24–44 (IALYVGLAIFIVLALANFLLS) and 303–323 (FPSVWLGGVSAGLAVLFFFII). One can recognise an HAMP domain in the interval 343-394 (QRNQAAILRLLDELGDLADGDLTVQATVTEDFTGAIADSINYSIDQLRNLVQ). A Methyl-accepting transducer domain is found at 399–635 (SAVQVASAAQ…HISNTMNVIQ (237 aa)).

The protein belongs to the methyl-accepting chemotaxis (MCP) protein family.

It is found in the membrane. Its pathway is hydrocarbon metabolism; alkane degradation. Chemotactic-signal transducers respond to changes in the concentration of attractants and repellents in the environment, transduce a signal from the outside to the inside of the cell, and facilitate sensory adaptation through the variation of the level of methylation. The protein is Putative methyl-accepting chemotaxis AlkN of Alcanivorax borkumensis (strain ATCC 700651 / DSM 11573 / NCIMB 13689 / SK2).